The chain runs to 274 residues: MTKVEYKHTHIAAKKKLGQNFLLDKNIPRKIVRESGIKEGDLVLEIGPGFGALSTAILEVMPSFTAIEKDPELARFIREEHPEINLIEGDFLKVPLEPLTGSGKLAVLGNIPYSITSPILFRLLDNRHLIESATLMMQHEVAQRITAVPGTKEYGILAVQMQAFCDVKYLFKVGRAVFKPRPEVDSAVIRLVPKAQNPVEDSEGFRTFVRRAFHQRRKTLWNNLKEYYNTSEVPAETLKLRAEALTVEGLIELFEKLTPIDHALNDPETRNGIE.

Asn20, Leu22, Gly47, Glu68, Asp90, and Asn110 together coordinate S-adenosyl-L-methionine.

It belongs to the class I-like SAM-binding methyltransferase superfamily. rRNA adenine N(6)-methyltransferase family. RsmA subfamily.

It localises to the cytoplasm. The enzyme catalyses adenosine(1518)/adenosine(1519) in 16S rRNA + 4 S-adenosyl-L-methionine = N(6)-dimethyladenosine(1518)/N(6)-dimethyladenosine(1519) in 16S rRNA + 4 S-adenosyl-L-homocysteine + 4 H(+). In terms of biological role, specifically dimethylates two adjacent adenosines (A1518 and A1519) in the loop of a conserved hairpin near the 3'-end of 16S rRNA in the 30S particle. May play a critical role in biogenesis of 30S subunits. This chain is Ribosomal RNA small subunit methyltransferase A, found in Chlorobaculum parvum (strain DSM 263 / NCIMB 8327) (Chlorobium vibrioforme subsp. thiosulfatophilum).